A 296-amino-acid polypeptide reads, in one-letter code: tRNA dimethylallyltransferase (296 aa).

2–9 serves as a coordination point for ATP; sequence GPTASGKT. Position 4–9 (4–9) interacts with substrate; that stretch reads TASGKT. Interaction with substrate tRNA stretches follow at residues 27–30, 151–155, and 232–237; these read DSAL, QRLSR, and RCVGYR.

The protein belongs to the IPP transferase family. Monomer. Requires Mg(2+) as cofactor.

It catalyses the reaction adenosine(37) in tRNA + dimethylallyl diphosphate = N(6)-dimethylallyladenosine(37) in tRNA + diphosphate. In terms of biological role, catalyzes the transfer of a dimethylallyl group onto the adenine at position 37 in tRNAs that read codons beginning with uridine, leading to the formation of N6-(dimethylallyl)adenosine (i(6)A). This is tRNA dimethylallyltransferase from Shewanella sp. (strain ANA-3).